The chain runs to 69 residues: NADH dehydrogenase [ubiquinone] 1 beta subcomplex subunit 2 (69 aa).

This sequence belongs to the complex I NDUFB2 subunit family. Complex I is composed of at least 49 different subunits.

The protein resides in the mitochondrion inner membrane. Accessory subunit of the mitochondrial membrane respiratory chain NADH dehydrogenase (Complex I), that is believed not to be involved in catalysis. Complex I functions in the transfer of electrons from NADH to the respiratory chain. The immediate electron acceptor for the enzyme is believed to be ubiquinone. This chain is NADH dehydrogenase [ubiquinone] 1 beta subcomplex subunit 2, found in Arabidopsis thaliana (Mouse-ear cress).